Reading from the N-terminus, the 454-residue chain is GTPase Der (454 aa).

2 consecutive EngA-type G domains span residues 3-167 (PVIT…GIAE) and 181-354 (MKIA…AAAM). Residues 9–16 (GRPNVGKS), 56–60 (DTGGF), 119–122 (NKTE), 187–194 (GRPNVGKS), 234–238 (DTAGL), and 299–302 (NKWD) each bind GTP. A KH-like domain is found at 355–439 (AKLPTPRLTR…PLRIQMNTAK (85 aa)).

It belongs to the TRAFAC class TrmE-Era-EngA-EngB-Septin-like GTPase superfamily. EngA (Der) GTPase family. Associates with the 50S ribosomal subunit.

GTPase that plays an essential role in the late steps of ribosome biogenesis. This chain is GTPase Der, found in Polynucleobacter asymbioticus (strain DSM 18221 / CIP 109841 / QLW-P1DMWA-1) (Polynucleobacter necessarius subsp. asymbioticus).